The following is a 467-amino-acid chain: MSKGTLFDKVWDLHTVRILPSGQTQLFIGLHLIHEVTSPQAFAMLRERNLKVLFPDRTVATVDHIVPTENQARPFIDDLAEEMMRAIETNAKDNNIRFYNIGSGNQGIVHVIAPEQGLTQPGMTIACGDSHTSTHGAFGAIAFGIGTSQVRDVLATQTLALSKLKVRKIEVNGKLSPGVYAKDVILHIIRKLGVKGGVGYAYEYAGTTFESMSMEERMTVCNMSIEGGARCGYINPDGVTFEYLKGRDFSPQGEDWDKAVDWWKSIRSDEDAQYDDVVVFEAADIEPTVTWGITPGQGIGVSEAVPTPESLAESDRYIAKEAYEYMKLIPGSPIKGTKIDVCFIGSCTNGRISDLREAAKFAQGRQVATGVKAFVVPGSERVKQQAEAEGLDKIFVEAGFEWREAGCSMCLAMNPDKLQGDQISASSSNRNFKGRQGSSTGRTLLMSPAMVVAAAVNGKVADVREFI.

The [4Fe-4S] cluster site is built by Cys347, Cys407, and Cys410.

The protein belongs to the aconitase/IPM isomerase family. LeuC type 1 subfamily. As to quaternary structure, heterodimer of LeuC and LeuD. [4Fe-4S] cluster serves as cofactor.

The enzyme catalyses (2R,3S)-3-isopropylmalate = (2S)-2-isopropylmalate. It functions in the pathway amino-acid biosynthesis; L-leucine biosynthesis; L-leucine from 3-methyl-2-oxobutanoate: step 2/4. Functionally, catalyzes the isomerization between 2-isopropylmalate and 3-isopropylmalate, via the formation of 2-isopropylmaleate. The protein is 3-isopropylmalate dehydratase large subunit of Gloeothece citriformis (strain PCC 7424) (Cyanothece sp. (strain PCC 7424)).